The chain runs to 341 residues: Very-long-chain 3-oxoacyl-CoA reductase (341 aa).

Residues 22–42 (AIYGFLLAGVAAFAAPIVSTI) traverse the membrane as a helical segment. NADP(+) contacts are provided by Leu-67, Asp-123, Asp-131, Asn-150, Tyr-217, Lys-221, Ile-250, and Thr-252. The Proton donor role is filled by Tyr-217. Lys-221 (lowers pKa of active site Tyr) is an active-site residue.

Belongs to the short-chain dehydrogenases/reductases (SDR) family.

It localises to the endoplasmic reticulum membrane. The enzyme catalyses a very-long-chain (3R)-3-hydroxyacyl-CoA + NADP(+) = a very-long-chain 3-oxoacyl-CoA + NADPH + H(+). Its pathway is lipid metabolism; fatty acid biosynthesis. Component of the microsomal membrane bound fatty acid elongation system, which produces the 26-carbon very long-chain fatty acids (VLCFA) from palmitate. Catalyzes the reduction of the 3-ketoacyl-CoA intermediate that is formed in each cycle of fatty acid elongation. VLCFAs serve as precursors for ceramide and sphingolipids. This Phaeosphaeria nodorum (strain SN15 / ATCC MYA-4574 / FGSC 10173) (Glume blotch fungus) protein is Very-long-chain 3-oxoacyl-CoA reductase.